The sequence spans 60 residues: Large ribosomal subunit protein uL30 (60 aa).

The protein belongs to the universal ribosomal protein uL30 family. In terms of assembly, part of the 50S ribosomal subunit.

This Ralstonia pickettii (strain 12J) protein is Large ribosomal subunit protein uL30.